Here is a 577-residue protein sequence, read N- to C-terminus: Arginine--tRNA ligase (577 aa).

Positions 122 to 132 (PNVAKEMHVGH) match the 'HIGH' region motif.

This sequence belongs to the class-I aminoacyl-tRNA synthetase family. In terms of assembly, monomer.

The protein localises to the cytoplasm. It carries out the reaction tRNA(Arg) + L-arginine + ATP = L-arginyl-tRNA(Arg) + AMP + diphosphate. This is Arginine--tRNA ligase from Shigella dysenteriae serotype 1 (strain Sd197).